Reading from the N-terminus, the 993-residue chain is Synaptonemal complex protein 1 (993 aa).

The short motif at 98 to 108 (PMSRLYSKLYK) is the Mediates head to head self-assembly of N-terminal ends element. A Nuclear localization signal motif is present at residues 114-117 (KKWK). 2 coiled-coil regions span residues 117–172 (KVSI…LIKE) and 215–688 (IEKM…EIEN). Residues 203–359 (ETRQVYVDLN…SQLTEVKEAQ (157 aa)) form an interaction with SYCE3 region. Residues 694–788 (GKLLGEVEKA…VSLKKQLEIE (95 aa)) are required for pH-induced assembly of C-terminal ends into antiparallel tetramers. A Nuclear localization signal motif is present at residues 697–700 (LGEV). Residues 764-808 (KIALETELSNIRNELVSLKKQLEIEKEEKEKLKMAKENTAILKDK) are a coiled coil. Residues 801–993 (NTAILKDKKD…RLKEAEKLFS (193 aa)) form a DNA-binding region. S820 is modified (phosphoserine). The interval 824–861 (TSWKFDSKTTPSQNISRLSSSMDSGKSKDNRDNLRASA) is disordered. Residues 831 to 847 (KTTPSQNISRLSSSMDS) are compositionally biased toward polar residues. The span at 848–857 (GKSKDNRDNL) shows a compositional bias: basic and acidic residues. The short motif at 898-901 (KKRK) is the Nuclear localization signal element.

Structural component of synaptonemal complexes. Homotetramer that consists of an N-terminal four-helical bundle that bifurcates into two elongated C-terminal dimeric coiled coils. This tetrameric building block potentially self-assembles into a supramolecular zipper-like lattice to mediate meiotic chromosome synapsis. Self-assembly is likely initiated by local proton density at chromosome axis, which is predicted to trigger antiparallel back to back assembly of adjacent C-terminal ends into tetrameric structures that anchor to chromosomal DNA. Then the N-terminal ends are predicted to undergo cooperative antiparallel head to head assembly at the midline of synaptonemal complexes central element to form a zipper-like lattice between properly aligned homologous chromosomes. The nascent synapsis generated by SYCP1 is stabilized through interaction with central element proteins SYCE1 and SYCE2. Interacts (via tetrameric core) with SYCE3; the interaction remodels SYCP1 homotetramers to 2:1 heterotrimers with SYCE3. SYCP1/SYCE3 heterotrimers form lattice assemblies as part of the mature synaptonemal complex via both lateral and head-to-head interactions. Forms a complex with EWSR1, PRDM9, SYCP3 and REC8; complex formation is dependent of phosphorylated form of REC8 and requires PRDM9 bound to hotspot DNA; EWSR1 joins PRDM9 with the chromosomal axis through REC8. Interacts with SPO16. As to expression, detected in testis. Detected in spermatocytes (at protein level).

The protein localises to the nucleus. It is found in the chromosome. It localises to the centromere. Major component of the transverse filaments of synaptonemal complexes, formed between homologous chromosomes during meiotic prophase. Required for normal assembly of the central element of the synaptonemal complexes. Required for normal centromere pairing during meiosis. Required for normal meiotic chromosome synapsis during oocyte and spermatocyte development and for normal male and female fertility. The polypeptide is Synaptonemal complex protein 1 (Mus musculus (Mouse)).